The primary structure comprises 375 residues: N5-carboxyaminoimidazole ribonucleotide synthase (375 aa).

Residues Arg-108, Lys-148, 153–159 (GYDGKGQ), 183–186 (EQYL), Glu-191, His-214, and 266–267 (NE) contribute to the ATP site. Positions 112-296 (KQTLLEANTQ…QFDTHILAIT (185 aa)) constitute an ATP-grasp domain.

Belongs to the PurK/PurT family. Homodimer.

It carries out the reaction 5-amino-1-(5-phospho-beta-D-ribosyl)imidazole + hydrogencarbonate + ATP = 5-carboxyamino-1-(5-phospho-D-ribosyl)imidazole + ADP + phosphate + 2 H(+). The protein operates within purine metabolism; IMP biosynthesis via de novo pathway; 5-amino-1-(5-phospho-D-ribosyl)imidazole-4-carboxylate from 5-amino-1-(5-phospho-D-ribosyl)imidazole (N5-CAIR route): step 1/2. In terms of biological role, catalyzes the ATP-dependent conversion of 5-aminoimidazole ribonucleotide (AIR) and HCO(3)(-) to N5-carboxyaminoimidazole ribonucleotide (N5-CAIR). This chain is N5-carboxyaminoimidazole ribonucleotide synthase, found in Staphylococcus epidermidis (strain ATCC 35984 / DSM 28319 / BCRC 17069 / CCUG 31568 / BM 3577 / RP62A).